The sequence spans 182 residues: Glutamyl-tRNA(Gln) amidotransferase subunit F, mitochondrial (182 aa).

This sequence belongs to the GatF family. As to quaternary structure, subunit of the heterotrimeric GatFAB amidotransferase (AdT) complex, composed of A, B and F subunits.

Its subcellular location is the mitochondrion inner membrane. It catalyses the reaction L-glutamyl-tRNA(Gln) + L-glutamine + ATP + H2O = L-glutaminyl-tRNA(Gln) + L-glutamate + ADP + phosphate + H(+). Its function is as follows. Allows the formation of correctly charged Gln-tRNA(Gln) through the transamidation of misacylated Glu-tRNA(Gln) in the mitochondria. The reaction takes place in the presence of glutamine and ATP through an activated gamma-phospho-Glu-tRNA(Gln). Required for proper protein synthesis within the mitochondrion. The sequence is that of Glutamyl-tRNA(Gln) amidotransferase subunit F, mitochondrial from Candida tropicalis (strain ATCC MYA-3404 / T1) (Yeast).